The primary structure comprises 73 residues: U-scoloptoxin(15)-Sa1a (73 aa).

Positions 1 to 20 (MKFHIIFCLLAALMMTSAFA) are cleaved as a signal peptide.

This sequence belongs to the scoloptoxin-15 family. Post-translationally, contains 2 disulfide bonds. As to expression, expressed by the venom gland.

It localises to the secreted. This is U-scoloptoxin(15)-Sa1a from Scolopendra alternans (Florida Keys giant centipede).